A 983-amino-acid polypeptide reads, in one-letter code: Seizure protein 6 homolog (983 aa).

Positions 1 to 19 (MRPAALLLLPSLLALLVHG) are cleaved as a signal peptide. 2 disordered regions span residues 80–132 (GQEK…WSLE) and 148–194 (PGMA…QTTG). The segment covering 101–112 (NQDSRPVFTSPT) has biased composition (polar residues). Pro residues predominate over residues 154–167 (TPGPGERPNTPPPS). Asn-278 carries N-linked (GlcNAc...) asparagine glycosylation. The Sushi 1 domain maps to 344–403 (LSCHFPRRPAYGAVTVTSLHPGGSARFRCATGYQLKGARLLTCLNATQPFWDSQEPVCIA). 12 disulfides stabilise this stretch: Cys-346-Cys-386, Cys-372-Cys-401, Cys-405-Cys-432, Cys-521-Cys-563, Cys-548-Cys-578, Cys-582-Cys-608, Cys-699-Cys-741, Cys-727-Cys-754, Cys-760-Cys-802, Cys-788-Cys-819, Cys-827-Cys-869, and Cys-855-Cys-884. Asn-388, Asn-425, and Asn-530 each carry an N-linked (GlcNAc...) asparagine glycan. A CUB 1 domain is found at 405 to 516 (CGGVIRNATT…AGMALRYEAF (112 aa)). Residues 519–580 (GHCYEPFVKY…WNETEPACRA (62 aa)) enclose the Sushi 2 domain. The region spanning 582-693 (CSGETTDSAG…QGFVIHFFEV (112 aa)) is the CUB 2 domain. Sushi domains lie at 697–756 (DTCP…SCQR), 758–821 (TSCL…KCLL), and 825–886 (KPCH…ICRA). Residues 915-935 (LAAAIFLPLVAMALLVGGVYL) form a helical membrane-spanning segment.

It belongs to the SEZ6 family.

It is found in the cell membrane. Functionally, may play a role in cell-cell recognition and in neuronal membrane signaling. Seems to be important for the achievement of the necessary balance between dendrite elongation and branching during the elaboration of a complex dendritic arbor. Involved in the development of appropriate excitatory synaptic connectivity. The polypeptide is Seizure protein 6 homolog (SEZ6) (Bos taurus (Bovine)).